The following is a 273-amino-acid chain: Putative phosphoenolpyruvate synthase regulatory protein (273 aa).

ADP is bound at residue 153-160 (GVSRSGKT).

It belongs to the pyruvate, phosphate/water dikinase regulatory protein family. PSRP subfamily.

The catalysed reaction is [pyruvate, water dikinase] + ADP = [pyruvate, water dikinase]-phosphate + AMP + H(+). It carries out the reaction [pyruvate, water dikinase]-phosphate + phosphate + H(+) = [pyruvate, water dikinase] + diphosphate. Bifunctional serine/threonine kinase and phosphorylase involved in the regulation of the phosphoenolpyruvate synthase (PEPS) by catalyzing its phosphorylation/dephosphorylation. This is Putative phosphoenolpyruvate synthase regulatory protein from Polaromonas sp. (strain JS666 / ATCC BAA-500).